The primary structure comprises 367 residues: Glutamate 5-kinase (367 aa).

K10 serves as a coordination point for ATP. Residues S50, D137, and N149 each coordinate substrate. ATP-binding positions include T169–D170 and T211–K217. In terms of domain architecture, PUA spans A275–E353.

The protein belongs to the glutamate 5-kinase family.

The protein resides in the cytoplasm. The enzyme catalyses L-glutamate + ATP = L-glutamyl 5-phosphate + ADP. The protein operates within amino-acid biosynthesis; L-proline biosynthesis; L-glutamate 5-semialdehyde from L-glutamate: step 1/2. Catalyzes the transfer of a phosphate group to glutamate to form L-glutamate 5-phosphate. The polypeptide is Glutamate 5-kinase (Salmonella paratyphi A (strain ATCC 9150 / SARB42)).